A 610-amino-acid chain; its full sequence is DNA mismatch repair protein MutL (610 aa).

Belongs to the DNA mismatch repair MutL/HexB family.

Its function is as follows. This protein is involved in the repair of mismatches in DNA. It is required for dam-dependent methyl-directed DNA mismatch repair. May act as a 'molecular matchmaker', a protein that promotes the formation of a stable complex between two or more DNA-binding proteins in an ATP-dependent manner without itself being part of a final effector complex. The protein is DNA mismatch repair protein MutL of Rickettsia africae (strain ESF-5).